A 424-amino-acid chain; its full sequence is SNF1-related protein kinase regulatory subunit gamma-1 (424 aa).

A2 is modified (N-acetylalanine). Position 44 is a phosphoserine (S44). CBS domains are found at residues 63-131, 185-244, 263-324, and 350-408; these read LSSD…EPPS, TFRW…CAGL, MSKD…YHDY, and IMSG…SGYF.

This sequence belongs to the 5'-AMP-activated protein kinase gamma subunit family. As to quaternary structure, subunit of a probable heterotrimeric complex consisting of an alpha catalytic (KIN10 or KIN11) subunit, and a beta (KINB) and a gamma (KING or SNF4) non-catalytic regulatory subunits. Interacts with HXK1 in mitochondrion. In terms of processing, sumoylated by SIZ1. In terms of tissue distribution, expressed in vegetative organs and, to lower extent, in reproductive organs.

The protein localises to the mitochondrion. Functionally, regulatory subunit of the probable trimeric SNF1-related protein kinase (SnRK) complex, which may play a role in a signal transduction cascade regulating gene expression and carbohydrate metabolism in higher plants. The SnRK complex may also be involved in the regulation of fatty acid synthesis by phosphorylation of acetyl-CoA carboxylase and in assimilation of nitrogen by phosphorylating nitrate reductase. The sequence is that of SNF1-related protein kinase regulatory subunit gamma-1 (KING1) from Arabidopsis thaliana (Mouse-ear cress).